The chain runs to 290 residues: ATP synthase gamma chain (290 aa).

This sequence belongs to the ATPase gamma chain family. In terms of assembly, F-type ATPases have 2 components, CF(1) - the catalytic core - and CF(0) - the membrane proton channel. CF(1) has five subunits: alpha(3), beta(3), gamma(1), delta(1), epsilon(1). CF(0) has three main subunits: a, b and c.

Its subcellular location is the cell inner membrane. Its function is as follows. Produces ATP from ADP in the presence of a proton gradient across the membrane. The gamma chain is believed to be important in regulating ATPase activity and the flow of protons through the CF(0) complex. The chain is ATP synthase gamma chain from Amoebophilus asiaticus (strain 5a2).